Here is a 3674-residue protein sequence, read N- to C-terminus: Dystrophin (3674 aa).

Residues 1–236 form an actin-binding region; the sequence is MSEVSSDERE…YVTSLFQVLP (236 aa). Calponin-homology (CH) domains lie at 11-115 and 130-236; these read DVQK…LHWQ and TNSE…QVLP. Residues 59-68 are ANK2- and ANK-3 binding; it reads PKEKGSTRVH. Residues 306-318 show a composition bias toward polar residues; the sequence is SDPTRSPFPSQRL. The interval 306-325 is disordered; sequence SDPTRSPFPSQRLESPEDKS. Spectrin repeat units lie at residues 335-443, 444-552, 555-663, 715-824, 826-930, 939-1041, 1044-1150, 1153-1259, 1262-1363, 1364-1459, 1464-1564, 1567-1672, 1675-1774, 1775-1870, 1873-1975, 1988-2097, 2100-2204, 2207-2314, 2315-2412, 2464-2566, 2569-2675, 2678-2791, 2797-2919, and 2924-3029; these read VNLD…NLHK, VLMD…LLQD, LKWQ…QISQ, EIRK…WLEY, NRII…ELQI, RYQE…KLEE, AKLR…ALKG, DKTI…TLEE, ACWH…LLEQ, SIQS…LFQK, EQRL…QLEK, KLSR…LLLE, KHME…KASI, PLKE…KALE, HQWY…TVHE, EISY…KFDR, EKWR…RLEE, NILS…EIEA, HIKD…LRAK, FNRA…QLNE, KDST…VLEE, RLLQ…HLEA, KRLH…RKID, and RLQE…QLHE. The interval 1411–1909 is interaction with SYNM; sequence SDLTSHEISL…PEPQDEKKIK (499 aa). Residues 3044–3077 form the WW domain; sequence TSVQGPWERAISPNKVPYYINHETQTTCWDHPKM. The segment at 3047 to 3397 is interaction with SYNM; that stretch reads QGPWERAISP…TVLEGDNMET (351 aa). The ZZ-type; degenerate zinc-finger motif lies at 3297–3353; that stretch reads KHQAKCNICKECPIIGFRYRSLKHFNYDICQSCFFSGRVAKGHKMHYPMVEYCTPTT. The Zn(2+) site is built by C3302, C3305, C3326, and C3329. The tract at residues 3455 to 3507 is binds to SNTB1; that stretch reads DDEHLLIQHYCQSLNQDSPLSQPRSPAQILISLESEERGELERILADLEEENR. Phosphoserine occurs at positions 3472, 3479, and 3489. Disordered stretches follow at residues 3517-3543 and 3590-3674; these read KQQH…QSPR and QAEA…EDTM. Polar residues-rich tracts occupy residues 3596-3615 and 3651-3662; these read NGTT…SSQP and QLNNSFPSSRGR. 6 positions are modified to phosphoserine: S3601, S3602, S3606, S3612, S3613, and S3655.

As to quaternary structure, interacts with SYNM. Interacts with the syntrophins SNTG1 and SNTG2. Interacts with KRT19. Component of the dystrophin-associated glycoprotein complex which is composed of three subcomplexes: a cytoplasmic complex comprised of DMD (or UTRN), DTNA and a number of syntrophins, such as SNTB1, SNTB2, SNTG1 and SNTG2, the transmembrane dystroglycan complex, and the sarcoglycan-sarcospan complex. Interacts with DAG1 (betaDAG1) with DMD; the interaction is inhibited by phosphorylation on the PPXY motif of DAG1. Interacts with SYNM; SNTA1 and SNTB1. Interacts with CMYA5. Directly interacts with ANK2 and ANK3; these interactions do not interfere with betaDAG1-binding and are necessary for proper localization in muscle cells. Identified in a dystroglycan complex that contains at least PRX, DRP2, UTRN, DMD and DAG1. Interacts with DTNB. Interacts with PGM5; the interaction is direct. Interacts with NOS1; localizes NOS1 to sarcolemma in muscle cells. As to expression, in the retina, expressed in the outer plexiform layer (OPL) and around the blood vessels. Also observed at the vitreal border of the retina corresponding to the inner limiting membrane (ILM). Presynaptically localized in cone pedicles and postsynaptically in bipolar cells (at protein level).

The protein localises to the cell membrane. Its subcellular location is the sarcolemma. It is found in the cytoplasm. The protein resides in the cytoskeleton. It localises to the postsynaptic cell membrane. In terms of biological role, anchors the extracellular matrix to the cytoskeleton via F-actin. Ligand for dystroglycan. Component of the dystrophin-associated glycoprotein complex which accumulates at the neuromuscular junction (NMJ) and at a variety of synapses in the peripheral and central nervous systems and has a structural function in stabilizing the sarcolemma. Also implicated in signaling events and synaptic transmission. The sequence is that of Dystrophin from Sus scrofa (Pig).